The sequence spans 304 residues: uncharacterized protein (304 aa).

Residues T58 and Y121 each act as charge relay system in the active site. Residue Y147 is the Proton donor of the active site. Catalysis depends on K175, which acts as the Schiff-base intermediate with substrate.

Belongs to the DapA family. As to quaternary structure, homotetramer.

It is found in the cytoplasm. This is an uncharacterized protein from Halobacterium salinarum (strain ATCC 29341 / DSM 671 / R1).